The chain runs to 445 residues: Exodeoxyribonuclease 7 large subunit (445 aa).

Belongs to the XseA family. Heterooligomer composed of large and small subunits.

It is found in the cytoplasm. The enzyme catalyses Exonucleolytic cleavage in either 5'- to 3'- or 3'- to 5'-direction to yield nucleoside 5'-phosphates.. In terms of biological role, bidirectionally degrades single-stranded DNA into large acid-insoluble oligonucleotides, which are then degraded further into small acid-soluble oligonucleotides. The polypeptide is Exodeoxyribonuclease 7 large subunit (Shewanella oneidensis (strain ATCC 700550 / JCM 31522 / CIP 106686 / LMG 19005 / NCIMB 14063 / MR-1)).